The chain runs to 407 residues: Substance-P receptor (407 aa).

Topologically, residues 1–31 are extracellular; that stretch reads MDNVLPMDSDLFPNISTNTSESNQFVQPTWQ. Residues asparagine 14 and asparagine 18 are each glycosylated (N-linked (GlcNAc...) asparagine). Residues 32–54 traverse the membrane as a helical segment; sequence IVLWAAAYTVIVVTSVVGNVVVI. The Cytoplasmic portion of the chain corresponds to 55–64; sequence WIILAHKRMR. The helical transmembrane segment at 65–86 threads the bilayer; that stretch reads TVTNYFLVNLAFAEACMAAFNT. The Extracellular portion of the chain corresponds to 87 to 106; sequence VVNFTYAVHNVWYYGLFYCK. Cysteine 105 and cysteine 180 are disulfide-bonded. A helical transmembrane segment spans residues 107 to 128; the sequence is FHNFFPIAALFASIYSMTAVAF. At 129 to 148 the chain is on the cytoplasmic side; that stretch reads DRYMAIIHPLQPRLSATATK. Residues 149 to 169 form a helical membrane-spanning segment; the sequence is VVIFVIWVLALLLAFPQGYYS. The Extracellular segment spans residues 170 to 194; that stretch reads TTETMPSRVVCMIEWPEHPNRTYEK. A helical transmembrane segment spans residues 195-219; the sequence is AYHICVTVLIYFLPLLVIGYAYTVV. Over 220 to 248 the chain is Cytoplasmic; the sequence is GITLWASEIPGDSSDRYHEQVSAKRKVVK. A helical transmembrane segment spans residues 249-270; it reads MMIVVVCTFAICWLPFHVFFLL. Over 271-283 the chain is Extracellular; that stretch reads PYINPDLYLKKFI. Residues 284–308 form a helical membrane-spanning segment; it reads QQVYLASMWLAMSSTMYNPIIYCCL. Over 309-407 the chain is Cytoplasmic; that stretch reads NDRFRLGFKH…SSSFYSNMLA (99 aa). The S-palmitoyl cysteine moiety is linked to residue cysteine 322. The interval 362–407 is disordered; that stretch reads VGAHEEEPEEGPKATPSSLDLTSNGSSRSNSKTMTESSSFYSNMLA. Residues 376-407 show a composition bias toward polar residues; that stretch reads TPSSLDLTSNGSSRSNSKTMTESSSFYSNMLA.

The protein belongs to the G-protein coupled receptor 1 family. In terms of assembly, interacts with ARRB1.

It is found in the cell membrane. Its function is as follows. This is a receptor for the tachykinin neuropeptide substance P. It is probably associated with G proteins that activate a phosphatidylinositol-calcium second messenger system. The rank order of affinity of this receptor to tachykinins is: substance P &gt; substance K &gt; neuromedin-K. This chain is Substance-P receptor (Tacr1), found in Rattus norvegicus (Rat).